The chain runs to 164 residues: Putative anionic 4-hydroxy-benzoate permease (164 aa).

Positions 1 to 30 (CGRRRGSLAWPDASSPSANPRPGAGAAESS) are disordered. The next 3 helical transmembrane spans lie at 62–82 (LWVACFGFGTGACIILALMFM), 97–117 (GMAQCVGYLLAAFGPPLVGGL), and 126–146 (PALTVCLVLSLTMAAAGMLAG).

This sequence belongs to the major facilitator superfamily. Cyanate porter (TC 2.A.1.17) family.

It localises to the cell membrane. Functionally, may be involved in uptake of anionic 4-hydroxy-benzoate. In Thauera aromatica, this protein is Putative anionic 4-hydroxy-benzoate permease.